Consider the following 305-residue polypeptide: E3 ubiquitin-protein ligase RNF115 (305 aa).

A2 is modified (N-acetylalanine). A compositionally biased stretch (basic and acidic residues) spans 100-110; that stretch reads NRANERGHQTH. The tract at residues 100–139 is disordered; that stretch reads NRANERGHQTHTDFWGPSRPPRLPMTRRYRSRGSTRPDRS. Residue S133 is modified to Phosphoserine. An RING-type zinc finger spans residues 229-270; that stretch reads CPVCKEDYTVEEKVRQLPCNHFFHSSCIVPWLELHDTCPVCR. The disordered stretch occupies residues 274 to 305; it reads NGEDSTRQTQSSEASASNRFSNDSQLHDRWTF. Over residues 280–297 the composition is skewed to polar residues; that stretch reads RQTQSSEASASNRFSNDS.

In terms of assembly, interacts with RAB7A. Interacts with EGFR and FLT3. Interacts with BST2. Interacts with STX17. Interacts with YWHAE. Post-translationally, phosphorylated by AKT1, allowing association with the 14-3-3 chaperones that facilitates associating with TLRs. In terms of processing, deubiquitinated by USP9X; antogonizing its autoubiquitination and subsequent proteasomal degradation. RING-type zinc finger-dependent and E2-dependent autoubiquitination.

It localises to the cytoplasm. It is found in the cytoplasmic vesicle. The protein localises to the phagosome. The protein resides in the nucleus. Its subcellular location is the endoplasmic reticulum. It localises to the golgi apparatus. The enzyme catalyses S-ubiquitinyl-[E2 ubiquitin-conjugating enzyme]-L-cysteine + [acceptor protein]-L-lysine = [E2 ubiquitin-conjugating enzyme]-L-cysteine + N(6)-ubiquitinyl-[acceptor protein]-L-lysine.. It participates in protein modification; protein ubiquitination. Functionally, E3 ubiquitin-protein ligase that catalyzes the 'Lys-48'- and/or 'Lys-63'-linked polyubiquitination of various substrates and thereby plays a role in a number of signaling pathways including autophagy, innate immunity, cell proliferation and cell death. Plays a role in the endosomal trafficking and degradation of membrane receptors including EGFR, FLT3, MET and CXCR4 through their polyubiquitination. Participates together with BST2 in antiviral immunity by facilitating the internalization of HIV-1 virions into intracellular vesicles leading to their lysosomal degradation. Also possesses an antiviral activity independently of BST2 by promoting retroviral GAG proteins ubiquitination, redistribution to endo-lysosomal compartments and, ultimately, lysosomal degradation. Catalyzes distinct types of ubiquitination on MAVS and STING1 at different phases of viral infection to promote innate antiviral response. Mediates the 'Lys-48'-linked ubiquitination of MAVS leading to its proteasomal degradation and ubiquitinates STING1 via 'Lys-63'-linked polyubiquitination, critical for its oligomerization and the subsequent recruitment of TBK1. Plays a positive role in the autophagosome-lysosome fusion by interacting with STX17 and enhancing its stability without affecting 'Lys-48'- or 'Lys-63'-linked polyubiquitination levels, which in turn promotes autophagosome maturation. Negatively regulates TLR-induced expression of proinflammatory cytokines by catalyzing 'Lys-11'-linked ubiquitination of RAB1A and RAB13 to inhibit post-ER trafficking of TLRs to the Golgi by RAB1A and subsequently from the Golgi apparatus to the cell surface by RAB13. This Mus musculus (Mouse) protein is E3 ubiquitin-protein ligase RNF115.